The following is a 369-amino-acid chain: 3-dehydroquinate synthase (369 aa).

NAD(+) contacts are provided by residues 71-76, 105-109, 129-130, K142, K151, and 169-172; these read DGECHK, GVIND, TT, and TLST. E184, H247, and H264 together coordinate Zn(2+).

It belongs to the sugar phosphate cyclases superfamily. Dehydroquinate synthase family. The cofactor is Co(2+). Zn(2+) serves as cofactor. Requires NAD(+) as cofactor.

It is found in the cytoplasm. It carries out the reaction 7-phospho-2-dehydro-3-deoxy-D-arabino-heptonate = 3-dehydroquinate + phosphate. The protein operates within metabolic intermediate biosynthesis; chorismate biosynthesis; chorismate from D-erythrose 4-phosphate and phosphoenolpyruvate: step 2/7. Catalyzes the conversion of 3-deoxy-D-arabino-heptulosonate 7-phosphate (DAHP) to dehydroquinate (DHQ). The polypeptide is 3-dehydroquinate synthase (Dichelobacter nodosus (strain VCS1703A)).